Consider the following 626-residue polypeptide: Probable metalloendopeptidase G1-type (626 aa).

A Zn(2+)-binding site is contributed by His-42. Glu-45 is a catalytic residue. His-46 provides a ligand contact to Zn(2+).

Belongs to the peptidase M44 family. The cofactor is Zn(2+).

Its function is as follows. Seems to be involved in viral proteins maturation by cleavage at Ala-Gly-|-Xaa motifs. In Fowlpox virus (strain NVSL) (FPV), this protein is Probable metalloendopeptidase G1-type.